Here is a 297-residue protein sequence, read N- to C-terminus: Protein PecM (297 aa).

The next 10 helical transmembrane spans lie at Phe6 to Pro26, Ala38 to Trp58, Leu60 to Tyr80, Val86 to Leu106, Val116 to Leu136, Pro138 to Thr158, Met167 to Val187, Leu203 to Ser223, Val231 to Phe251, and Leu261 to Ser281. 2 consecutive EamA domains span residues Cys12–Ser130 and Met149–Asp276.

This sequence belongs to the EamA transporter family.

The protein localises to the cell membrane. Functionally, involved in pectinase, cellulase, and blue pigment regulation. The protein is Protein PecM (pecM) of Dickeya dadantii (strain 3937) (Erwinia chrysanthemi (strain 3937)).